The chain runs to 361 residues: Holliday junction branch migration complex subunit RuvB (361 aa).

Residues Met1–Asp25 form a disordered region. Positions Thr5 to Tyr207 are large ATPase domain (RuvB-L). ATP contacts are provided by residues Leu46, Arg47, Gly88, Lys91, Thr92, Thr93, Glu154 to Tyr156, Arg197, Tyr207, and Arg244. A Mg(2+)-binding site is contributed by Thr92. Residues Thr208–Asp278 are small ATPAse domain (RuvB-S). The segment at Pro281–Ser361 is head domain (RuvB-H). The DNA site is built by Arg336 and Arg341.

It belongs to the RuvB family. In terms of assembly, homohexamer. Forms an RuvA(8)-RuvB(12)-Holliday junction (HJ) complex. HJ DNA is sandwiched between 2 RuvA tetramers; dsDNA enters through RuvA and exits via RuvB. An RuvB hexamer assembles on each DNA strand where it exits the tetramer. Each RuvB hexamer is contacted by two RuvA subunits (via domain III) on 2 adjacent RuvB subunits; this complex drives branch migration. In the full resolvosome a probable DNA-RuvA(4)-RuvB(12)-RuvC(2) complex forms which resolves the HJ.

It localises to the cytoplasm. It carries out the reaction ATP + H2O = ADP + phosphate + H(+). Its function is as follows. The RuvA-RuvB-RuvC complex processes Holliday junction (HJ) DNA during genetic recombination and DNA repair, while the RuvA-RuvB complex plays an important role in the rescue of blocked DNA replication forks via replication fork reversal (RFR). RuvA specifically binds to HJ cruciform DNA, conferring on it an open structure. The RuvB hexamer acts as an ATP-dependent pump, pulling dsDNA into and through the RuvAB complex. RuvB forms 2 homohexamers on either side of HJ DNA bound by 1 or 2 RuvA tetramers; 4 subunits per hexamer contact DNA at a time. Coordinated motions by a converter formed by DNA-disengaged RuvB subunits stimulates ATP hydrolysis and nucleotide exchange. Immobilization of the converter enables RuvB to convert the ATP-contained energy into a lever motion, pulling 2 nucleotides of DNA out of the RuvA tetramer per ATP hydrolyzed, thus driving DNA branch migration. The RuvB motors rotate together with the DNA substrate, which together with the progressing nucleotide cycle form the mechanistic basis for DNA recombination by continuous HJ branch migration. Branch migration allows RuvC to scan DNA until it finds its consensus sequence, where it cleaves and resolves cruciform DNA. The sequence is that of Holliday junction branch migration complex subunit RuvB from Delftia acidovorans (strain DSM 14801 / SPH-1).